The primary structure comprises 266 residues: 5'-nucleotidase SurE (266 aa).

A divalent metal cation contacts are provided by aspartate 8, aspartate 9, serine 40, and asparagine 98.

It belongs to the SurE nucleotidase family. It depends on a divalent metal cation as a cofactor.

It is found in the cytoplasm. It catalyses the reaction a ribonucleoside 5'-phosphate + H2O = a ribonucleoside + phosphate. Nucleotidase that shows phosphatase activity on nucleoside 5'-monophosphates. The polypeptide is 5'-nucleotidase SurE (Parasynechococcus marenigrum (strain WH8102)).